Reading from the N-terminus, the 143-residue chain is Translation initiation factor 2 subunit beta (143 aa).

This sequence belongs to the eIF-2-beta/eIF-5 family. As to quaternary structure, heterotrimer composed of an alpha, a beta and a gamma chain.

Its function is as follows. eIF-2 functions in the early steps of protein synthesis by forming a ternary complex with GTP and initiator tRNA. This Methanocaldococcus jannaschii (strain ATCC 43067 / DSM 2661 / JAL-1 / JCM 10045 / NBRC 100440) (Methanococcus jannaschii) protein is Translation initiation factor 2 subunit beta (eif2b).